The chain runs to 237 residues: Uridylate kinase (237 aa).

10 to 13 contributes to the ATP binding site; that stretch reads KLSG. Gly52 provides a ligand contact to UMP. ATP contacts are provided by Gly53 and Arg57. Residues Asp72 and 133–140 each bind UMP; that span reads TGNPFFTT. The ATP site is built by Thr160, Tyr166, and Asp169.

It belongs to the UMP kinase family. Homohexamer.

The protein localises to the cytoplasm. It carries out the reaction UMP + ATP = UDP + ADP. It participates in pyrimidine metabolism; CTP biosynthesis via de novo pathway; UDP from UMP (UMPK route): step 1/1. With respect to regulation, inhibited by UTP. Functionally, catalyzes the reversible phosphorylation of UMP to UDP. This is Uridylate kinase from Thiobacillus denitrificans (strain ATCC 25259 / T1).